The following is a 217-amino-acid chain: ATP-dependent Clp protease proteolytic subunit (217 aa).

The active-site Nucleophile is the Ser-120. The active site involves His-145.

This sequence belongs to the peptidase S14 family. Fourteen ClpP subunits assemble into 2 heptameric rings which stack back to back to give a disk-like structure with a central cavity, resembling the structure of eukaryotic proteasomes.

The protein resides in the cytoplasm. The enzyme catalyses Hydrolysis of proteins to small peptides in the presence of ATP and magnesium. alpha-casein is the usual test substrate. In the absence of ATP, only oligopeptides shorter than five residues are hydrolyzed (such as succinyl-Leu-Tyr-|-NHMec, and Leu-Tyr-Leu-|-Tyr-Trp, in which cleavage of the -Tyr-|-Leu- and -Tyr-|-Trp bonds also occurs).. Functionally, cleaves peptides in various proteins in a process that requires ATP hydrolysis. Has a chymotrypsin-like activity. Plays a major role in the degradation of misfolded proteins. This is ATP-dependent Clp protease proteolytic subunit from Ralstonia nicotianae (strain ATCC BAA-1114 / GMI1000) (Ralstonia solanacearum).